A 1372-amino-acid polypeptide reads, in one-letter code: Serine protease pic autotransporter (1372 aa).

Positions 1-55 (MNKVYSLKYCPVTGGLIAVSELARRVIKKTCRRLTHILLAGIPAICLCYSQISQA) are cleaved as a signal peptide. In terms of domain architecture, Peptidase S6 spans 56–301 (GIVRSDIAYQ…NVIPTDYLNQ (246 aa)). Residues H127, D155, and S258 each act as charge relay system in the active site. In terms of domain architecture, Autotransporter spans 1106–1372 (DTNGDAGAWA…AVNANFRYMF (267 aa)).

Post-translationally, cleaved to release the mature protein from the outer membrane.

The protein localises to the periplasm. It localises to the secreted. The protein resides in the cell surface. It is found in the cell outer membrane. Involved in intestinal colonization, displays in vitro mucinolytic activity, serum resistance, and hemagglutination. Important to penetrate the intestinal mucus layer. This chain is Serine protease pic autotransporter (pic), found in Escherichia coli O44:H18 (strain 042 / EAEC).